Here is a 284-residue protein sequence, read N- to C-terminus: Pantothenate synthetase (284 aa).

34-41 is a binding site for ATP; the sequence is MGALHAGH. The active-site Proton donor is the histidine 41. Glutamine 65 serves as a coordination point for (R)-pantoate. Glutamine 65 is a beta-alanine binding site. 151–154 is a binding site for ATP; that stretch reads GEKD. Glutamine 157 contacts (R)-pantoate. ATP contacts are provided by residues leucine 180 and 188 to 191; that span reads MSSR.

Belongs to the pantothenate synthetase family. In terms of assembly, homodimer.

It localises to the cytoplasm. The enzyme catalyses (R)-pantoate + beta-alanine + ATP = (R)-pantothenate + AMP + diphosphate + H(+). It participates in cofactor biosynthesis; (R)-pantothenate biosynthesis; (R)-pantothenate from (R)-pantoate and beta-alanine: step 1/1. Functionally, catalyzes the condensation of pantoate with beta-alanine in an ATP-dependent reaction via a pantoyl-adenylate intermediate. The protein is Pantothenate synthetase of Paramagnetospirillum magneticum (strain ATCC 700264 / AMB-1) (Magnetospirillum magneticum).